The sequence spans 1376 residues: Zinc finger MYM-type protein 2 (1376 aa).

Residues 30–53 (NVGNSFSGPPNPLVSRSSKFQNSS) show a composition bias toward polar residues. 2 disordered regions span residues 30–56 (NVGN…SVED) and 85–158 (TSSK…FSSS). Residues lysine 48, lysine 88, lysine 98, and lysine 104 each participate in a glycyl lysine isopeptide (Lys-Gly) (interchain with G-Cter in SUMO2) cross-link. Positions 127–138 (TNQGQEKSSSNF) are enriched in polar residues. Positions 139–152 (IERRPSETKNRTND) are enriched in basic and acidic residues. Residues lysine 147, lysine 253, and lysine 297 each participate in a glycyl lysine isopeptide (Lys-Gly) (interchain with G-Cter in SUMO2) cross-link. The interval 269–304 (DVFQNGESAPHHNPDSWISQSASFPRNQKQQGVDSL) is disordered. Residues 284-302 (SWISQSASFPRNQKQQGVD) show a composition bias toward polar residues. Serine 305 bears the Phosphoserine mark. Glycyl lysine isopeptide (Lys-Gly) (interchain with G-Cter in SUMO2) cross-links involve residues lysine 312, lysine 324, lysine 347, and lysine 365. Residues 326 to 362 (VKVTCANCKKPLQKGQTAYQRKGSAHLFCSTTCLSSF) form an MYM-type 1 zinc finger. The MYM-type 2 zinc-finger motif lies at 368–408 (PKKLCVMCKKDITTMKGTIVAQVDSSESFQEFCSTSCLSLY). Glycyl lysine isopeptide (Lys-Gly) (interchain with G-Cter in SUMO2) cross-links involve residues lysine 416, lysine 440, lysine 490, lysine 502, lysine 512, lysine 528, and lysine 531. MYM-type zinc fingers lie at residues 420–455 (NKSR…FNRY) and 462–501 (IMNC…VTEY). The MYM-type 5 zinc-finger motif lies at 532–569 (LTTCTGCRTQCRFFDMTQCIGPNGYMEPYCSTACMNSH). Residues lysine 575, lysine 602, lysine 648, lysine 657, lysine 687, lysine 699, and lysine 708 each participate in a glycyl lysine isopeptide (Lys-Gly) (interchain with G-Cter in SUMO2) cross-link. The MYM-type 6 zinc finger occupies 635 to 670 (QLKCNYCKNSFCSKPEILEWENKVHQFCSKTCSDDY). 2 consecutive MYM-type zinc fingers follow at residues 722–757 (RCVT…CKKF) and 763–798 (KAAR…LLRF). Residues lysine 763, lysine 787, lysine 811, and lysine 828 each participate in a glycyl lysine isopeptide (Lys-Gly) (interchain with G-Cter in SUMO2) cross-link. Serine 837 is subject to Phosphoserine. The disordered stretch occupies residues 1027–1063 (VFGEEYEEQPRPRSKKKGTKRKAVSGYQSHDDSSDNS). Residues 1038–1049 (PRSKKKGTKRKA) show a composition bias toward basic residues. A Phosphoserine modification is found at serine 1063. Threonine 1375 is subject to Phosphothreonine.

In terms of assembly, can form homodimers. May be a component of a BHC histone deacetylase complex that contains HDAC1, HDAC2, HMG20B/BRAF35, KDM1A, RCOR1/CoREST, PHF21A/BHC80, ZMYM2, ZNF217, ZMYM3, GSE1 and GTF2I. Interacts with FOXP1 and FOXP2. As to expression, low but widespread expression is detected in the developing kidney.

It is found in the nucleus. In terms of biological role, involved in the negative regulation of transcription. The protein is Zinc finger MYM-type protein 2 (Zmym2) of Mus musculus (Mouse).